Reading from the N-terminus, the 487-residue chain is GPI mannosyltransferase 1 (487 aa).

Helical transmembrane passes span 26–46 (PLPL…YGLW), 87–107 (ILAW…GPWA), and 121–141 (VLFA…LVMG). Positions 147-175 (SAAKGKEKDTEKTKEGGKKGPSVTASTGM) are disordered. Residues 150-164 (KGKEKDTEKTKEGGK) show a composition bias toward basic and acidic residues. A run of 7 helical transmembrane segments spans residues 205–225 (LLGV…ITLA), 227–247 (LLLG…PAIV), 289–309 (LLLA…MYRL), 359–379 (IESL…PLTL), 393–413 (FAFV…YLVL), 429–449 (MGLV…QQAY), and 462–482 (GLWM…GVIV).

It belongs to the PIGM family.

It is found in the endoplasmic reticulum membrane. It participates in glycolipid biosynthesis; glycosylphosphatidylinositol-anchor biosynthesis. Its function is as follows. Mannosyltransferase involved in glycosylphosphatidylinositol-anchor biosynthesis. Transfers the first alpha-1,4-mannose to GlcN-acyl-PI during GPI precursor assembly. Required for cell wall integrity. The polypeptide is GPI mannosyltransferase 1 (gim-1) (Neurospora crassa (strain ATCC 24698 / 74-OR23-1A / CBS 708.71 / DSM 1257 / FGSC 987)).